The primary structure comprises 231 residues: MILLKLYLTLAAILCQSRGMTSLDLDDLMTTNPEIQNEIINKHNDLRRTVDPPAKNMLKMSWDNIIAESAKRAALRCNYKEHTSIAERTIGGVVCGENYFMSSNPRTWSSSIQSWFDERNNFMFGFGPTIPGVMVGHYTQVVWYKSYKVGCAINLCPAQSLKYFQVCQYCPGGNVAGRKYEPYTIGEPCAARPKDCDNGLCTNPCAYNDDYTSCPDLTKQVGCHHPVTANC.

An N-terminal signal peptide occupies residues 1 to 19 (MILLKLYLTLAAILCQSRG). The 129-residue stretch at 41–169 (NKHNDLRRTV…SLKYFQVCQY (129 aa)) folds into the SCP domain. 5 cysteine pairs are disulfide-bonded: cysteine 77-cysteine 156, cysteine 95-cysteine 170, cysteine 151-cysteine 167, cysteine 189-cysteine 196, and cysteine 214-cysteine 231. The 27-residue stretch at 205 to 231 (CAYNDDYTSCPDLTKQVGCHHPVTANC) folds into the ShKT domain.

It belongs to the CRISP family. Contains 8 disulfide bonds. As to expression, expressed by the venom gland.

It localises to the secreted. Its function is as follows. Blocks ryanodine receptors, and potassium channels. This chain is Cysteine-rich venom protein VAR10, found in Varanus varius (Lace monitor lizard).